A 447-amino-acid polypeptide reads, in one-letter code: ATP-dependent protease ATPase subunit HslU (447 aa).

ATP contacts are provided by residues isoleucine 17, 59–64 (GVGKTE), aspartate 256, glutamate 321, and arginine 393.

Belongs to the ClpX chaperone family. HslU subfamily. In terms of assembly, a double ring-shaped homohexamer of HslV is capped on each side by a ring-shaped HslU homohexamer. The assembly of the HslU/HslV complex is dependent on binding of ATP.

The protein localises to the cytoplasm. Functionally, ATPase subunit of a proteasome-like degradation complex; this subunit has chaperone activity. The binding of ATP and its subsequent hydrolysis by HslU are essential for unfolding of protein substrates subsequently hydrolyzed by HslV. HslU recognizes the N-terminal part of its protein substrates and unfolds these before they are guided to HslV for hydrolysis. This chain is ATP-dependent protease ATPase subunit HslU, found in Stutzerimonas stutzeri (strain A1501) (Pseudomonas stutzeri).